A 372-amino-acid polypeptide reads, in one-letter code: Alanine dehydrogenase (372 aa).

Positions 15 and 75 each coordinate substrate. H96 acts as the Proton donor/acceptor in catalysis. NAD(+) is bound by residues S134, 178–179 (TA), D198, S220, 239–240 (VL), 266–269 (IAID), R279, and 298–301 (VANM). D269 acts as the Proton donor/acceptor in catalysis.

Belongs to the AlaDH/PNT family. Homohexamer.

The protein resides in the cytoplasm. The enzyme catalyses L-alanine + NAD(+) + H2O = pyruvate + NH4(+) + NADH + H(+). Its pathway is amino-acid degradation; L-alanine degradation via dehydrogenase pathway; NH(3) and pyruvate from L-alanine: step 1/1. Its function is as follows. Catalyzes the reversible reductive amination of pyruvate to L-alanine. A key factor in the assimilation of L-alanine as an energy source via the tricarboxylic acid cycle during sporulation. The chain is Alanine dehydrogenase (ald) from Geobacillus stearothermophilus (Bacillus stearothermophilus).